The primary structure comprises 111 residues: uncharacterized protein (111 aa).

This is an uncharacterized protein from Schizosaccharomyces pombe (strain 972 / ATCC 24843) (Fission yeast).